We begin with the raw amino-acid sequence, 134 residues long: DNA-binding protein H-NS homolog (134 aa).

A disordered region spans residues 106–134 (HKTWTGQGRTPRPIQNALNKGKSLSDFEI). The DNA-binding element occupies 112–117 (QGRTPR).

It belongs to the histone-like protein H-NS family. In terms of assembly, homodimer that oligomerizes on DNA into higher-order complexes that form bridges between disparate regions of DNA compacting it.

The protein localises to the cytoplasm. It is found in the nucleoid. Functionally, a DNA-binding protein implicated in transcriptional repression and chromosome organization and compaction. Binds nucleation sites in AT-rich DNA and bridges them, forming higher-order nucleoprotein complexes and condensing the chromosome. As many horizontally transferred genes are AT-rich, it plays a central role in silencing foreign genes. A subset of genes are repressed by H-NS in association with other proteins. The protein is DNA-binding protein H-NS homolog (hns) of Haemophilus influenzae (strain ATCC 51907 / DSM 11121 / KW20 / Rd).